Reading from the N-terminus, the 197-residue chain is Putative peptidyl-prolyl cis-trans isomerase (197 aa).

The region spanning 14–195 is the PPIase cyclophilin-type domain; it reads GEIKVVMHTN…HDVVIESIDV (182 aa).

The protein belongs to the cyclophilin-type PPIase family.

The catalysed reaction is [protein]-peptidylproline (omega=180) = [protein]-peptidylproline (omega=0). In terms of biological role, PPIases accelerate the folding of proteins. It catalyzes the cis-trans isomerization of proline imidic peptide bonds in oligopeptides. The sequence is that of Putative peptidyl-prolyl cis-trans isomerase from Staphylococcus aureus (strain COL).